The chain runs to 205 residues: MLEARDLYCERDERTLFRGLSFTVDAGEWVQVTGGNGAGKTTLLRLLTGLARPDGGEVYWQGEPLRRVRDSFHRSLLWIGHQPGIKTRLTARENLHFFHPGDGARLPEALAQAGLAGFEDVPVARLSAGQQRRVALARLWLTRAALWVLDEPFTAIDVNGVARLTRRMAAHTAQGGMVILTTHQPLPGAADTVRRLALTGGEAGL.

The ABC transporter domain occupies 2-205 (LEARDLYCER…LALTGGEAGL (204 aa)). Residue 34-41 (GGNGAGKT) coordinates ATP.

This sequence belongs to the ABC transporter superfamily. CcmA exporter (TC 3.A.1.107) family. As to quaternary structure, the complex is composed of two ATP-binding proteins (CcmA) and two transmembrane proteins (CcmB).

It is found in the cell inner membrane. It catalyses the reaction heme b(in) + ATP + H2O = heme b(out) + ADP + phosphate + H(+). In terms of biological role, part of the ABC transporter complex CcmAB involved in the biogenesis of c-type cytochromes; once thought to export heme, this seems not to be the case, but its exact role is uncertain. Responsible for energy coupling to the transport system. This Salmonella paratyphi A (strain ATCC 9150 / SARB42) protein is Cytochrome c biogenesis ATP-binding export protein CcmA 1.